A 208-amino-acid polypeptide reads, in one-letter code: MLKVLDHPLIKIKLTNMRNRESGHSVFRQNLNEIGSLMVYEILRDYQTKRKEIITSINKKYLGYEFDKDVVFVPILRAGLGMIDGLLKLIPEAKVGHIGMSRDETTFKPTEYFYKIPEVPKDSYIFVVDPMLATGNSAVDAITRLRKDGFNNISLVCLVGVKEGVDNVEKHFGHDINIYLAALDECLNKDKYIEPGLGDAGDRIFGTK.

Residues R77, R102, and 129 to 137 (DPMLATGNS) contribute to the 5-phospho-alpha-D-ribose 1-diphosphate site. Residues I193 and 198 to 200 (GDA) contribute to the uracil site. Position 199 (D199) interacts with 5-phospho-alpha-D-ribose 1-diphosphate.

The protein belongs to the UPRTase family. It depends on Mg(2+) as a cofactor.

It carries out the reaction UMP + diphosphate = 5-phospho-alpha-D-ribose 1-diphosphate + uracil. Its pathway is pyrimidine metabolism; UMP biosynthesis via salvage pathway; UMP from uracil: step 1/1. With respect to regulation, allosterically activated by GTP. In terms of biological role, catalyzes the conversion of uracil and 5-phospho-alpha-D-ribose 1-diphosphate (PRPP) to UMP and diphosphate. In Mycoplasmopsis agalactiae (strain NCTC 10123 / CIP 59.7 / PG2) (Mycoplasma agalactiae), this protein is Uracil phosphoribosyltransferase.